A 426-amino-acid chain; its full sequence is MSKSENLYSAARELIPGGVNSPVRAFTGVGGTPLFIEKADGAYLYDVDGKAYIDYVGSWGPMVLGHNHPAIRNAVIEAAERGLSFGAPTEMEVKMAELVTNLVPTMDMVRMVNSGTEATMSAIRLARGFTGRDKIIKFEGCYHGHADCLLVKAGSGALTLGQPNSPGVPADFAKHTLTCTYNDLTSVRAAFEQYPQEIACIIVEPVAGNMNCVPPLPEFLPGLRALCDEFGALLIIDEVMTGFRVALAGAQDYYGVVPDLTCLGKIIGGGMPVGAFGGRRDVMDALAPTGPVYQAGTLSGNPIAMAAGFACLNEVAQPGIHETLDELTTRLAEGLCEAAQEAGIPLVVNHVGGMFGIFFTDAESVTCYQDVMACDVERFKRFFHLMLEEGVYLAPSAFEAGFMSVAHSMDDINNTIDAARRVFATL.

An N6-(pyridoxal phosphate)lysine modification is found at K265.

Belongs to the class-III pyridoxal-phosphate-dependent aminotransferase family. HemL subfamily. As to quaternary structure, homodimer. Pyridoxal 5'-phosphate serves as cofactor.

It localises to the cytoplasm. The enzyme catalyses (S)-4-amino-5-oxopentanoate = 5-aminolevulinate. It participates in porphyrin-containing compound metabolism; protoporphyrin-IX biosynthesis; 5-aminolevulinate from L-glutamyl-tRNA(Glu): step 2/2. This Salmonella heidelberg (strain SL476) protein is Glutamate-1-semialdehyde 2,1-aminomutase.